We begin with the raw amino-acid sequence, 100 residues long: Large ribosomal subunit protein bL21 (100 aa).

The protein belongs to the bacterial ribosomal protein bL21 family. Part of the 50S ribosomal subunit. Contacts proteins L15 and L20.

In terms of biological role, binds directly to 23S rRNA, probably serving to organize its structure. The sequence is that of Large ribosomal subunit protein bL21 from Deinococcus radiodurans (strain ATCC 13939 / DSM 20539 / JCM 16871 / CCUG 27074 / LMG 4051 / NBRC 15346 / NCIMB 9279 / VKM B-1422 / R1).